A 503-amino-acid polypeptide reads, in one-letter code: Lysine--tRNA ligase (503 aa).

Glu-414 and Glu-421 together coordinate Mg(2+).

It belongs to the class-II aminoacyl-tRNA synthetase family. As to quaternary structure, homodimer. Mg(2+) is required as a cofactor.

The protein resides in the cytoplasm. It carries out the reaction tRNA(Lys) + L-lysine + ATP = L-lysyl-tRNA(Lys) + AMP + diphosphate. This Neisseria meningitidis serogroup A / serotype 4A (strain DSM 15465 / Z2491) protein is Lysine--tRNA ligase.